The chain runs to 210 residues: N-(5'-phosphoribosyl)anthranilate isomerase (210 aa).

This sequence belongs to the TrpF family.

It carries out the reaction N-(5-phospho-beta-D-ribosyl)anthranilate = 1-(2-carboxyphenylamino)-1-deoxy-D-ribulose 5-phosphate. It functions in the pathway amino-acid biosynthesis; L-tryptophan biosynthesis; L-tryptophan from chorismate: step 3/5. This chain is N-(5'-phosphoribosyl)anthranilate isomerase, found in Magnetococcus marinus (strain ATCC BAA-1437 / JCM 17883 / MC-1).